A 1559-amino-acid chain; its full sequence is Arginine-glutamic acid dipeptide repeats protein (1559 aa).

A compositionally biased stretch (basic and acidic residues) spans 1–36 (MTADKDKDKDKEKDRDRDRDRERDKRDKARESENAR). The disordered stretch occupies residues 1-89 (MTADKDKDKD…KKKSRYERTD (89 aa)). Phosphoserine occurs at positions 53 and 56. Residues 73 to 84 (KSRKKPPKKKSR) are compositionally biased toward basic residues. The 181-residue stretch at 102–282 (VVYRPGDCVY…PETRRLNSTQ (181 aa)) folds into the BAH domain. Threonine 119 bears the Phosphothreonine mark. A phosphoserine mark is found at serine 141 and serine 303. An ELM2 domain is found at 283-386 (GEIRVGPSHQ…KALQRLVKKP (104 aa)). Residues 390 to 442 (LIEKCWTEDEVKRFVKGLRQYGKNFFRIRKELLPNKETGELITFYYYWKKTPE) form the SANT domain. The disordered stretch occupies residues 463 to 494 (TRTASTPVNTPSRPPSSEFLDLSSASEDDFDS). The segment covering 464 to 473 (RTASTPVNTP) has biased composition (polar residues). A compositionally biased stretch (low complexity) spans 478-487 (SSEFLDLSSA). The GATA-type zinc finger occupies 507–532 (RHCFTTTSKDWHHGGRENILLCTDCR). A disordered region spans residues 541–1125 (LPPIEKPVDP…PSHASQSARF (585 aa)). Lysine 559 participates in a covalent cross-link: Glycyl lysine isopeptide (Lys-Gly) (interchain with G-Cter in SUMO2). Serine 593, serine 599, and serine 612 each carry phosphoserine. Over residues 608 to 622 (SGRNSPSAASTSSND) the composition is skewed to low complexity. Positions 623–639 (SKAEAVKKSAKKVKEEA) are enriched in basic and acidic residues. Lysine 636 is covalently cross-linked (Glycyl lysine isopeptide (Lys-Gly) (interchain with G-Cter in SUMO2)). Phosphoserine occurs at positions 641, 655, 674, and 678. Residues 651-672 (EKVASDTEDTDRATSKKTKTQE) are compositionally biased toward basic and acidic residues. Positions 687–707 (SDSRSVNDEGSSDPKDIDQDN) are enriched in basic and acidic residues. The span at 708–735 (RSTSPSIPSPQDNESDSDSSAQQQMLQT) shows a compositional bias: polar residues. Residues 736–761 (QPPALQAPSGAASAPSTAPPGTTQLP) show a composition bias toward low complexity. Positions 768–791 (SATTVPPQGSPATSQPPNQTQSTV) are enriched in polar residues. A compositionally biased stretch (pro residues) spans 805–822 (LHPPRLPSPHPPLQPMTA). A compositionally biased stretch (low complexity) spans 890–900 (QLPASQSALQP). The span at 901–931 (QQPPREQPLPPAPLAMPHIKPPPTTPIPQLP) shows a compositional bias: pro residues. Low complexity predominate over residues 961–971 (KPLSSLSTHHP). The span at 1027–1053 (PQHPFVPGGPPPITPPSCPPTSTPPAG) shows a compositional bias: pro residues. Over residues 1054-1068 (PSSSSQPPCSAAVSS) the composition is skewed to low complexity. A phosphoserine mark is found at serine 1098, serine 1105, and serine 1107. Positions 1098–1109 (SPPPPPRSPSPE) are enriched in pro residues. Phosphothreonine is present on threonine 1111. A coiled-coil region spans residues 1148 to 1205 (GSKLAKKREEAIEKAKREAEQKAREEREREKEKEKEREREREREREAERAAQKASSSA). N6-acetyllysine is present on lysine 1150. Over residues 1154 to 1198 (KREEAIEKAKREAEQKAREEREREKEKEKEREREREREREAERAA) the composition is skewed to basic and acidic residues. Residues 1154 to 1239 (KREEAIEKAK…TTIAAVPPYI (86 aa)) form a disordered region. The residue at position 1252 (tyrosine 1252) is a Phosphotyrosine. Serine 1259 carries the post-translational modification Phosphoserine.

Interacts with HDAC1 and ATN1. Interaction with ATN1 is improved when the poly-Gln region of ATN1 is extended. Widely expressed.

It localises to the nucleus. It is found in the PML body. In terms of biological role, plays a role as a transcriptional repressor during development. May play a role in the control of cell survival. Interacts with FAT1. The polypeptide is Arginine-glutamic acid dipeptide repeats protein (Rere) (Rattus norvegicus (Rat)).